A 429-amino-acid chain; its full sequence is MIDPNLLRNNLAEVAEKLKVKRNFMLDTEKLTALEDQRKNLQVTTENLQAERNARSKAIGAAKARGEDIAPLLAEMDDMGNQLTEAKAQLDAVLAEINQIALSIPNLPADEVPLGKDDTENKEILRWGTPRTFDFEVKDHITLGEEANGLDFAAGAKLAGARFAVMKGQIAKMHRALAQFMLDLHTEQHGYLETYVPYLVNHATLYGTGQLPKFGEDLFHTLALQGEQPYALIPTAEVPVTNLVRDVIIDEAKLPIKMTAHTPCFRSEAGSYGRDTRGLIRMHQFDKVEMVQIVDPDKSMEALEELTGHAEKVLQLLNLPYRKVLLCTGDMGFGSCKTYDLEVWVPAQNTYREISSCSNMWDFQARRMQARCKAKGDKKTRLVHTLNGSGLAVGRTLVAVLENYQNADGSITVPEVLRPYMGGLDVIGK.

235-237 contacts L-serine; it reads TAE. 266 to 268 lines the ATP pocket; sequence RSE. Glu289 is an L-serine binding site. 353-356 contacts ATP; that stretch reads EISS. Ser389 contributes to the L-serine binding site.

It belongs to the class-II aminoacyl-tRNA synthetase family. Type-1 seryl-tRNA synthetase subfamily. As to quaternary structure, homodimer. The tRNA molecule binds across the dimer.

It is found in the cytoplasm. The enzyme catalyses tRNA(Ser) + L-serine + ATP = L-seryl-tRNA(Ser) + AMP + diphosphate + H(+). It carries out the reaction tRNA(Sec) + L-serine + ATP = L-seryl-tRNA(Sec) + AMP + diphosphate + H(+). Its pathway is aminoacyl-tRNA biosynthesis; selenocysteinyl-tRNA(Sec) biosynthesis; L-seryl-tRNA(Sec) from L-serine and tRNA(Sec): step 1/1. In terms of biological role, catalyzes the attachment of serine to tRNA(Ser). Is also able to aminoacylate tRNA(Sec) with serine, to form the misacylated tRNA L-seryl-tRNA(Sec), which will be further converted into selenocysteinyl-tRNA(Sec). The sequence is that of Serine--tRNA ligase from Haemophilus influenzae (strain PittEE).